Here is a 199-residue protein sequence, read N- to C-terminus: Crossover junction endodeoxyribonuclease RuvC (199 aa).

Catalysis depends on residues Asp-17, Glu-76, and Asp-148. Mg(2+) is bound by residues Asp-17, Glu-76, and Asp-148.

Belongs to the RuvC family. Homodimer which binds Holliday junction (HJ) DNA. The HJ becomes 2-fold symmetrical on binding to RuvC with unstacked arms; it has a different conformation from HJ DNA in complex with RuvA. In the full resolvosome a probable DNA-RuvA(4)-RuvB(12)-RuvC(2) complex forms which resolves the HJ. Mg(2+) is required as a cofactor.

It is found in the cytoplasm. It carries out the reaction Endonucleolytic cleavage at a junction such as a reciprocal single-stranded crossover between two homologous DNA duplexes (Holliday junction).. In terms of biological role, the RuvA-RuvB-RuvC complex processes Holliday junction (HJ) DNA during genetic recombination and DNA repair. Endonuclease that resolves HJ intermediates. Cleaves cruciform DNA by making single-stranded nicks across the HJ at symmetrical positions within the homologous arms, yielding a 5'-phosphate and a 3'-hydroxyl group; requires a central core of homology in the junction. The consensus cleavage sequence is 5'-(A/T)TT(C/G)-3'. Cleavage occurs on the 3'-side of the TT dinucleotide at the point of strand exchange. HJ branch migration catalyzed by RuvA-RuvB allows RuvC to scan DNA until it finds its consensus sequence, where it cleaves and resolves the cruciform DNA. This is Crossover junction endodeoxyribonuclease RuvC from Mannheimia succiniciproducens (strain KCTC 0769BP / MBEL55E).